The sequence spans 408 residues: uncharacterized protein (408 aa).

Residues 56–76 (YWAGPAAASMVAAVTPYVAWL) traverse the membrane as a helical segment.

Belongs to the mycobacterial PPE family.

The protein resides in the cell membrane. This is an uncharacterized protein from Mycobacterium bovis (strain ATCC BAA-935 / AF2122/97).